A 422-amino-acid polypeptide reads, in one-letter code: Serine--tRNA ligase (422 aa).

Position 229-231 (229-231 (TAE)) interacts with L-serine. 260-262 (RKE) serves as a coordination point for ATP. Glutamate 283 lines the L-serine pocket. Position 347–350 (347–350 (EISS)) interacts with ATP. Residue serine 383 coordinates L-serine.

It belongs to the class-II aminoacyl-tRNA synthetase family. Type-1 seryl-tRNA synthetase subfamily. As to quaternary structure, homodimer. The tRNA molecule binds across the dimer.

The protein localises to the cytoplasm. It catalyses the reaction tRNA(Ser) + L-serine + ATP = L-seryl-tRNA(Ser) + AMP + diphosphate + H(+). It carries out the reaction tRNA(Sec) + L-serine + ATP = L-seryl-tRNA(Sec) + AMP + diphosphate + H(+). It participates in aminoacyl-tRNA biosynthesis; selenocysteinyl-tRNA(Sec) biosynthesis; L-seryl-tRNA(Sec) from L-serine and tRNA(Sec): step 1/1. Its function is as follows. Catalyzes the attachment of serine to tRNA(Ser). Is also able to aminoacylate tRNA(Sec) with serine, to form the misacylated tRNA L-seryl-tRNA(Sec), which will be further converted into selenocysteinyl-tRNA(Sec). This chain is Serine--tRNA ligase, found in Geobacter sp. (strain M21).